The chain runs to 460 residues: Piperamide synthase (460 aa).

The interval 1–23 (MASSQLEFNVERKQPELLGPAEP) is disordered. Residues H168 and D383 each act as proton acceptor in the active site. A Microbody targeting signal motif is present at residues 458–460 (SRM).

This sequence belongs to the plant acyltransferase family. Monomer. In terms of tissue distribution, confined to immature fruits perisperm. Also detectable in roots.

It localises to the cytoplasm. It carries out the reaction piperidine + (E,E)-piperoyl-CoA = piperine + CoA + H(+). The protein operates within aromatic compound metabolism. Its function is as follows. Involved in the biosynthesis of aromatic piperamides natural products such as piperine (1-piperoyl-piperidine), the pungent principle contributing, together with several terpenoids, to the aromatic properties of black pepper fruits, and displaying numerous pharmacological activities such as antiproliferative, antitumor, antiangiogenesis, antioxidant, antidiabetic, antiobesity, cardioprotective, antimicrobial, antiaging, and immunomodulatory effects. Can use piperidine and benzylamine as acceptors and various CoA-esters with aliphatic and aromatic amines as CoA-donors, including piperoyl-CoA, hexanoyl-CoA and octanoyl-CoA, and, to a lower extent, benzoyl-CoA. Mediates the conversion of piperidine to three piperine isomers in the presence of piperoyl-CoA. Its ability to convert in vitro piperidine to hexanoylpiperidine in the presence of hexanoyl-CoA, and to octanoylpiperidine in the presence of octanoyl-CoA is not confirmed in vivo according to fruits metabolome analysis. The polypeptide is Piperamide synthase (Piper nigrum (Black pepper)).